A 430-amino-acid polypeptide reads, in one-letter code: Histidine--tRNA ligase (430 aa).

It belongs to the class-II aminoacyl-tRNA synthetase family. Homodimer.

It localises to the cytoplasm. The catalysed reaction is tRNA(His) + L-histidine + ATP = L-histidyl-tRNA(His) + AMP + diphosphate + H(+). The polypeptide is Histidine--tRNA ligase (Chlamydia abortus (strain DSM 27085 / S26/3) (Chlamydophila abortus)).